Here is a 282-residue protein sequence, read N- to C-terminus: Putative lactoylglutathione lyase (282 aa).

Ala-2 carries the post-translational modification N-acetylalanine. VOC domains are found at residues 17–141 and 147–274; these read RFLH…LIQR and PLCQ…LVDN. A Zn(2+)-binding site is contributed by His-20. Arg-24 serves as a coordination point for substrate. Glu-71 contributes to the Zn(2+) binding site. 2 residues coordinate substrate: Asn-75 and His-89. Positions 89 and 137 each coordinate Zn(2+). Glu-137 functions as the Proton donor/acceptor in the catalytic mechanism. 254-255 serves as a coordination point for substrate; that stretch reads LG.

It belongs to the glyoxalase I family. It depends on Zn(2+) as a cofactor.

The enzyme catalyses (R)-S-lactoylglutathione = methylglyoxal + glutathione. The protein operates within secondary metabolite metabolism; methylglyoxal degradation; (R)-lactate from methylglyoxal: step 1/2. Catalyzes the conversion of hemimercaptal, formed from methylglyoxal and glutathione, to S-lactoylglutathione. This Brassica oleracea var. gemmifera (Brussel sprouts) protein is Putative lactoylglutathione lyase.